A 341-amino-acid polypeptide reads, in one-letter code: Acetylpolyamine amidohydrolase (341 aa).

H157 acts as the Proton donor/acceptor in catalysis. 3 residues coordinate Zn(2+): D192, H194, and D281.

This sequence belongs to the histone deacetylase family. As to quaternary structure, homodimer. The cofactor is Zn(2+).

The catalysed reaction is N-acetylputrescine + H2O = putrescine + acetate. It carries out the reaction N-acetylcadaverine + H2O = cadaverine + acetate. The protein operates within amine and polyamine metabolism. In terms of biological role, involved in polyamine metabolism. Catalyzes the deacetylation of various acetylated polyamines such as N-acetylputrescine and N-acetylcadaverine. The polypeptide is Acetylpolyamine amidohydrolase (Burkholderia pseudomallei (strain 1710b)).